The sequence spans 161 residues: Globin CTT-VIIB-4 (161 aa).

A signal peptide spans 1 to 16 (MKFFAVLALCIVGAIA). In terms of domain architecture, Globin spans 18–161 (PLTADEASLV…NTMAVAVAHL (144 aa)). Positions 76 and 111 each coordinate heme b.

Belongs to the globin family. In terms of assembly, homodimer.

The protein is Globin CTT-VIIB-4 (CTT-7B4) of Chironomus thummi thummi (Midge).